The primary structure comprises 420 residues: Putative phosphate permease HI_1604 (420 aa).

12 consecutive transmembrane segments (helical) span residues 8-28 (GSWL…GIGA), 49-69 (AIII…GEVT), 88-108 (ILAL…FIAT), 112-132 (WPVS…CITI), 145-165 (IVGS…AIFA), 185-205 (GPYY…KKGL), 216-236 (ETLI…HFYF), 250-270 (FGAV…AMAF), 300-320 (GGAL…VGLI), 343-363 (FAAQ…GLPI), 370-390 (VGAI…LTVI), and 393-413 (IISS…IIFY).

Belongs to the inorganic phosphate transporter (PiT) (TC 2.A.20) family.

The protein resides in the cell inner membrane. Functionally, potential transporter for phosphate. This is Putative phosphate permease HI_1604 from Haemophilus influenzae (strain ATCC 51907 / DSM 11121 / KW20 / Rd).